The chain runs to 185 residues: Probable chorismate pyruvate-lyase 1 (185 aa).

Substrate-binding residues include R70, L108, and E166.

The protein belongs to the UbiC family.

It localises to the cytoplasm. It carries out the reaction chorismate = 4-hydroxybenzoate + pyruvate. The protein operates within cofactor biosynthesis; ubiquinone biosynthesis. Its function is as follows. Removes the pyruvyl group from chorismate, with concomitant aromatization of the ring, to provide 4-hydroxybenzoate (4HB) for the ubiquinone pathway. This Pseudomonas fluorescens (strain Pf0-1) protein is Probable chorismate pyruvate-lyase 1.